Reading from the N-terminus, the 715-residue chain is DNA ligase (715 aa).

NAD(+)-binding positions include 47 to 51 (DADYD), 96 to 97 (SL), and Glu-128. The N6-AMP-lysine intermediate role is filled by Lys-130. Positions 151, 188, 306, and 330 each coordinate NAD(+). Residues Cys-435, Cys-438, Cys-453, and Cys-459 each contribute to the Zn(2+) site. Residues 637–715 (RRDTAVAGKT…EDEWLALIGN (79 aa)) form the BRCT domain.

This sequence belongs to the NAD-dependent DNA ligase family. LigA subfamily. The cofactor is Mg(2+). Mn(2+) is required as a cofactor.

The catalysed reaction is NAD(+) + (deoxyribonucleotide)n-3'-hydroxyl + 5'-phospho-(deoxyribonucleotide)m = (deoxyribonucleotide)n+m + AMP + beta-nicotinamide D-nucleotide.. Functionally, DNA ligase that catalyzes the formation of phosphodiester linkages between 5'-phosphoryl and 3'-hydroxyl groups in double-stranded DNA using NAD as a coenzyme and as the energy source for the reaction. It is essential for DNA replication and repair of damaged DNA. The protein is DNA ligase of Rhodopseudomonas palustris (strain ATCC BAA-98 / CGA009).